A 379-amino-acid polypeptide reads, in one-letter code: Queuine tRNA-ribosyltransferase (379 aa).

Asp94 serves as the catalytic Proton acceptor. Substrate-binding positions include 94–98, Asp148, Gln191, and Gly218; that span reads DSGGF. The RNA binding stretch occupies residues 249–255; sequence GVGSPDS. The active-site Nucleophile is Asp268. The segment at 273–277 is RNA binding; important for wobble base 34 recognition; sequence TRIAR. Residues Cys306, Cys308, Cys311, and His337 each contribute to the Zn(2+) site.

The protein belongs to the queuine tRNA-ribosyltransferase family. In terms of assembly, homodimer. Within each dimer, one monomer is responsible for RNA recognition and catalysis, while the other monomer binds to the replacement base PreQ1. Zn(2+) is required as a cofactor.

The enzyme catalyses 7-aminomethyl-7-carbaguanine + guanosine(34) in tRNA = 7-aminomethyl-7-carbaguanosine(34) in tRNA + guanine. Its pathway is tRNA modification; tRNA-queuosine biosynthesis. Functionally, catalyzes the base-exchange of a guanine (G) residue with the queuine precursor 7-aminomethyl-7-deazaguanine (PreQ1) at position 34 (anticodon wobble position) in tRNAs with GU(N) anticodons (tRNA-Asp, -Asn, -His and -Tyr). Catalysis occurs through a double-displacement mechanism. The nucleophile active site attacks the C1' of nucleotide 34 to detach the guanine base from the RNA, forming a covalent enzyme-RNA intermediate. The proton acceptor active site deprotonates the incoming PreQ1, allowing a nucleophilic attack on the C1' of the ribose to form the product. After dissociation, two additional enzymatic reactions on the tRNA convert PreQ1 to queuine (Q), resulting in the hypermodified nucleoside queuosine (7-(((4,5-cis-dihydroxy-2-cyclopenten-1-yl)amino)methyl)-7-deazaguanosine). The polypeptide is Queuine tRNA-ribosyltransferase (Bacillus cereus (strain Q1)).